A 168-amino-acid chain; its full sequence is Lipoprotein signal peptidase (168 aa).

3 helical membrane-spanning segments follow: residues 6-26 (VLAA…DQIT), 70-90 (WFLA…IAKL), and 98-118 (ALAL…RMLL). Residues D123 and D141 contribute to the active site. Residues 139-159 (IADSAICIGAALLVWDSLFGT) form a helical membrane-spanning segment.

This sequence belongs to the peptidase A8 family.

Its subcellular location is the cell inner membrane. The catalysed reaction is Release of signal peptides from bacterial membrane prolipoproteins. Hydrolyzes -Xaa-Yaa-Zaa-|-(S,diacylglyceryl)Cys-, in which Xaa is hydrophobic (preferably Leu), and Yaa (Ala or Ser) and Zaa (Gly or Ala) have small, neutral side chains.. It participates in protein modification; lipoprotein biosynthesis (signal peptide cleavage). Its function is as follows. This protein specifically catalyzes the removal of signal peptides from prolipoproteins. The chain is Lipoprotein signal peptidase from Teredinibacter turnerae (strain ATCC 39867 / T7901).